A 720-amino-acid chain; its full sequence is Engulfment and cell motility protein 3 (720 aa).

The ELMO domain maps to 307–479; that stretch reads EQREQLQVLR…VVREQLARTL (173 aa). Positions 542 to 664 constitute a PH domain; the sequence is RLCEGTLFRK…TDGLSALLGS (123 aa). The SH3-binding motif lies at 696 to 706; sequence PERPPPVPPPP.

Probably interacts directly with the SH3-domain of DOCK1 via its SH3-binding site. Part of a complex with DOCK1 and RAC1. Interacts with ADGRB3.

It is found in the cytoplasm. Functionally, involved in cytoskeletal rearrangements required for phagocytosis of apoptotic cells and cell motility. Acts in association with DOCK1 and CRK. Was initially proposed to be required in complex with DOCK1 to activate Rac Rho small GTPases. May enhance the guanine nucleotide exchange factor (GEF) activity of DOCK1. This chain is Engulfment and cell motility protein 3 (ELMO3), found in Homo sapiens (Human).